Consider the following 719-residue polypeptide: Pesticidal crystal protein Cry1Ic (719 aa).

It belongs to the delta endotoxin family.

Promotes colloidosmotic lysis by binding to the midgut epithelial cells of insects. This Bacillus thuringiensis protein is Pesticidal crystal protein Cry1Ic (cry1Ic).